Reading from the N-terminus, the 454-residue chain is tRNA modification GTPase MnmE (454 aa).

Residues Arg23, Glu80, and Lys120 each coordinate (6S)-5-formyl-5,6,7,8-tetrahydrofolate. The TrmE-type G domain occupies 216–377 (GMKVVIAGRP…LRDHLKSSMG (162 aa)). K(+) is bound at residue Asn226. Residues 226 to 231 (NAGKSS), 245 to 251 (TDIAGTT), 270 to 273 (DTAG), 335 to 338 (NKAD), and 358 to 360 (SAR) each bind GTP. Residue Ser230 participates in Mg(2+) binding. The K(+) site is built by Thr245, Ile247, and Thr250. Residue Thr251 coordinates Mg(2+). Lys454 lines the (6S)-5-formyl-5,6,7,8-tetrahydrofolate pocket.

It belongs to the TRAFAC class TrmE-Era-EngA-EngB-Septin-like GTPase superfamily. TrmE GTPase family. As to quaternary structure, homodimer. Heterotetramer of two MnmE and two MnmG subunits. It depends on K(+) as a cofactor.

It localises to the cytoplasm. Functionally, exhibits a very high intrinsic GTPase hydrolysis rate. Involved in the addition of a carboxymethylaminomethyl (cmnm) group at the wobble position (U34) of certain tRNAs, forming tRNA-cmnm(5)s(2)U34. In Erwinia tasmaniensis (strain DSM 17950 / CFBP 7177 / CIP 109463 / NCPPB 4357 / Et1/99), this protein is tRNA modification GTPase MnmE.